We begin with the raw amino-acid sequence, 150 residues long: Cytosine deaminase (150 aa).

The CMP/dCMP-type deaminase domain occupies 3–121 (FDDKKGLQVA…KLLIENGVEV (119 aa)). Residue Asn44 coordinates substrate. A Zn(2+)-binding site is contributed by His55. Catalysis depends on Glu57, which acts as the Proton donor. Residues Cys84 and Cys87 each coordinate Zn(2+). Asp147 is a substrate binding site.

The protein belongs to the cytidine and deoxycytidylate deaminase family. As to quaternary structure, homodimer. The cofactor is Zn(2+).

It is found in the cytoplasm. Its subcellular location is the nucleus. It catalyses the reaction cytosine + H2O + H(+) = uracil + NH4(+). The protein operates within pyrimidine metabolism; UMP biosynthesis via salvage pathway; uracil from cytosine: step 1/1. Its function is as follows. Catalyzes the hydrolytic deamination of cytosine to uracil or 5-methylcytosine to thymine. Is involved in the pyrimidine salvage pathway, which allows the cell to utilize cytosine for pyrimidine nucleotide synthesis. This Candida albicans (strain SC5314 / ATCC MYA-2876) (Yeast) protein is Cytosine deaminase.